The following is a 100-amino-acid chain: uncharacterized protein (100 aa).

This is an uncharacterized protein from Caulobacter vibrioides (strain ATCC 19089 / CIP 103742 / CB 15) (Caulobacter crescentus).